A 212-amino-acid polypeptide reads, in one-letter code: Octanoyltransferase (212 aa).

The 179-residue stretch at 31–209 (AETQDEIWLV…HFANLLGYNI (179 aa)) folds into the BPL/LPL catalytic domain. Substrate-binding positions include 70–77 (RGGQITYH), 138–140 (SLG), and 151–153 (GLA). Cys-169 acts as the Acyl-thioester intermediate in catalysis.

The protein belongs to the LipB family.

Its subcellular location is the cytoplasm. It carries out the reaction octanoyl-[ACP] + L-lysyl-[protein] = N(6)-octanoyl-L-lysyl-[protein] + holo-[ACP] + H(+). Its pathway is protein modification; protein lipoylation via endogenous pathway; protein N(6)-(lipoyl)lysine from octanoyl-[acyl-carrier-protein]: step 1/2. Functionally, catalyzes the transfer of endogenously produced octanoic acid from octanoyl-acyl-carrier-protein onto the lipoyl domains of lipoate-dependent enzymes. Lipoyl-ACP can also act as a substrate although octanoyl-ACP is likely to be the physiological substrate. The sequence is that of Octanoyltransferase from Haemophilus influenzae (strain ATCC 51907 / DSM 11121 / KW20 / Rd).